The chain runs to 611 residues: CRS2-associated factor 2, chloroplastic (611 aa).

Residues 1–58 (MPPPPPQRPASSHVGRANLFSASPPPLSNRRYPHHRSLPLPPVSPRRRDPKKHSQQPS) constitute a chloroplast transit peptide. Residues 1–72 (MPPPPPQRPA…TDSGPTRTVT (72 aa)) are disordered. A compositionally biased stretch (polar residues) spans 55–72 (QQPSQEEPTDSGPTRTVT). CRM domains lie at 232–328 (EPLT…TRPR) and 350–446 (DGFT…YSKP). Positions 486–509 (KMFKLWKSAVDSSLALLLDDAEAN) are CRS2 binding. The segment at 554-578 (MNDEPETSVAGNEEGQLEQSPDLRD) is disordered.

Interacts with CRS2 and RNA. Part of large ribonucleo-protein complexes that include group IIB introns, CRS2 and CAF2.

It is found in the plastid. The protein localises to the chloroplast stroma. Required for the splicing of group IIB introns in chloroplasts. Forms splicing particles with CRS2. Interacts with RNA and confers intron specificity of the splicing particles. This chain is CRS2-associated factor 2, chloroplastic (CAF2), found in Zea mays (Maize).